The primary structure comprises 176 residues: Large ribosomal subunit protein uL6 (176 aa).

Belongs to the universal ribosomal protein uL6 family. In terms of assembly, part of the 50S ribosomal subunit.

Functionally, this protein binds to the 23S rRNA, and is important in its secondary structure. It is located near the subunit interface in the base of the L7/L12 stalk, and near the tRNA binding site of the peptidyltransferase center. This chain is Large ribosomal subunit protein uL6, found in Burkholderia multivorans (strain ATCC 17616 / 249).